The sequence spans 414 residues: Transmembrane protein 184A (414 aa).

Residues 1–32 (MTDTPGLLGTPLAWTPPARPAGPQMERAGNGS) are disordered. Helical transmembrane passes span 48–68 (VSGV…YLHL), 83–103 (LLFI…LLGG), 120–140 (FVIY…SAIM), 177–197 (LQFC…QAFG), 211–231 (LYIT…LFLF), 248–268 (FLTI…LAIL), and 290–310 (VAAG…SIAL). 2 disordered regions span residues 323 to 342 (TESS…GLKE) and 364 to 414 (YTQQ…AEEL). The segment covering 379-388 (SVPSPRTPTH) has biased composition (polar residues).

Belongs to the TMEM184 family. In terms of tissue distribution, expressed in vascular cells (at protein level).

The protein resides in the cell membrane. Its subcellular location is the cytoplasm. It localises to the perinuclear region. The protein localises to the cytoplasmic vesicle membrane. It is found in the early endosome membrane. The protein resides in the endosome. Its subcellular location is the cytoplasmic vesicle. It localises to the secretory vesicle membrane. Functionally, acts as a heparin receptor in vascular cells. May be involved in vesicle transport in exocrine cells and Sertoli cells. This is Transmembrane protein 184A (TMEM184A) from Bos taurus (Bovine).